The following is a 356-amino-acid chain: Cobalt-precorrin-5B C(1)-methyltransferase (356 aa).

It belongs to the CbiD family.

It carries out the reaction Co-precorrin-5B + S-adenosyl-L-methionine = Co-precorrin-6A + S-adenosyl-L-homocysteine. It functions in the pathway cofactor biosynthesis; adenosylcobalamin biosynthesis; cob(II)yrinate a,c-diamide from sirohydrochlorin (anaerobic route): step 6/10. In terms of biological role, catalyzes the methylation of C-1 in cobalt-precorrin-5B to form cobalt-precorrin-6A. This chain is Cobalt-precorrin-5B C(1)-methyltransferase, found in Geobacter sp. (strain M21).